The following is a 427-amino-acid chain: Sialic acid TRAP transporter large permease protein SiaM (427 aa).

Helical transmembrane passes span 11-31, 52-72, 82-102, 140-160, 165-185, 214-234, 246-266, 270-290, 301-321, 322-342, 348-368, and 394-414; these read LLFA…AFLI, FTLL…SAGI, SLVG…SLLF, ASCI…YGVV, IGAL…ALMV, AFLS…GKFT, ALFL…IEIL, VNTT…GWIV, DYFL…NLLL, LFLG…PFLV, VGID…IGIL, and VLPL…FPQF.

The protein belongs to the TRAP transporter large permease family. As to quaternary structure, the complex comprises the extracytoplasmic solute receptor protein SiaP, and the two transmembrane proteins SiaQ and SiaM. SiaQ and SiaM form a tight 1:1 complex.

Its subcellular location is the cell inner membrane. In terms of biological role, part of the tripartite ATP-independent periplasmic (TRAP) transport system SiaPQM that catalyzes unidirectional Na(+)-dependent sialic acid uptake. The chain is Sialic acid TRAP transporter large permease protein SiaM from Vibrio cholerae serotype O1 (strain ATCC 39315 / El Tor Inaba N16961).